The primary structure comprises 123 residues: Small ribosomal subunit protein uS12 (123 aa).

Asp89 is modified (3-methylthioaspartic acid). Residues 101–123 (SLDTSGVKDRKQGRSKYGAKRPK) form a disordered region. A compositionally biased stretch (basic residues) spans 113–123 (GRSKYGAKRPK).

It belongs to the universal ribosomal protein uS12 family. In terms of assembly, part of the 30S ribosomal subunit. Contacts proteins S8 and S17. May interact with IF1 in the 30S initiation complex.

Functionally, with S4 and S5 plays an important role in translational accuracy. Interacts with and stabilizes bases of the 16S rRNA that are involved in tRNA selection in the A site and with the mRNA backbone. Located at the interface of the 30S and 50S subunits, it traverses the body of the 30S subunit contacting proteins on the other side and probably holding the rRNA structure together. The combined cluster of proteins S8, S12 and S17 appears to hold together the shoulder and platform of the 30S subunit. The protein is Small ribosomal subunit protein uS12 of Azotobacter vinelandii (strain DJ / ATCC BAA-1303).